A 1005-amino-acid chain; its full sequence is MKFQRKYWGLLSTLGVSSAVALSACAAQARDVYVTSSASDLLKNNSVPMSMFNVSPTSSFFGSKYAGLTTYIATGSNKDDGVNVATQTQEKLVLELATSVKGYKKKDKATSSQKTSTNSSCTTTSSGTSTSGEDDWECIGEIKRQSSSNGQNNQQSKSITEEEKFQEISQKATRYEFAIDTGIKWVDNNGKPVKDASGNDVKLSSKDFERGFEAYILSSELRFNRNGYFIDLMGLDVKKTVGMTKKNGAQVQMKVASSDEKDGEEKTVKITDDAYNPEDYQSTDDSKFNVYLTSPFPFLLSMMSKEFFFPIPHTHPKVKAIKVGKDSPLVYNEKNGSKILDQTKTNFDGIYGGGVNAWRDTWSVGPYYVESFNQSQIVFKRNSEYDTHITPNLPKTREDNEKPIPTMINYFQPGATPEVFYSNYIAGGLSSAEVPYSQQEDARSRFAGTGDLRWVKVQKTAQSAQITYSSRPYVVEGETVKTNSNITETEAKFLYNSESEEALTIRAGINGLINWQNLAIILLPNSGDLNYSIVPFGIFKEKGKNGASVQQKAVSTTEGSDLMNDYYYKIEKEQRLGLIPQREGNYEKNKNVLESATVKINYYSSKATSGQAGAAASAAFAKNNNTSDNTQQNQTSSVEAKSVNVTKHSFVQALKKVGFSGSNPLHFNMKLGNSSLSANGVDYYNAVKQALTELGTADNGEKLIVPEIILGDAQGPTRNEWYIGLSSVLGFSSWSPDYDGVGTWLDAATQLNDQGGGDVITYSSGAHIVRTLLLAASQKDVHSKFTQKIDQQNTASTTSDVTVKKADSSQDSSKSNTEEEKWDDVTSADLFKDDPYVLKNFGDAKAQAAQRSTGSTTSGNGTQASLEFTKKALSLLKFLVDNGILDKEKVKEAIKDPNKYLGKRDKIENGTNKPSKNEDFIGYELKDIYKKAAQLNRFNSIWAEKDTDNAKFLITVVDSYFPVLPVPAAGLNETSPTLLKPWFQFRSAPSGNGTIRDYGFIPENK.

A signal peptide spans 1 to 24; the sequence is MKFQRKYWGLLSTLGVSSAVALSA. Cysteine 25 carries N-palmitoyl cysteine lipidation. A lipid anchor (S-diacylglycerol cysteine) is attached at cysteine 25. 2 disordered regions span residues 105-165 and 786-825; these read KKDK…EEKF and TQKI…WDDV. Low complexity-rich tracts occupy residues 110-131 and 145-156; these read TSSQ…TSTS and QSSSNGQNNQQS. A compositionally biased stretch (polar residues) spans 786–801; that stretch reads TQKIDQQNTASTTSDV.

Its subcellular location is the cell membrane. This is an uncharacterized protein from Mycoplasma pneumoniae (strain ATCC 29342 / M129 / Subtype 1) (Mycoplasmoides pneumoniae).